Consider the following 142-residue polypeptide: Transcription antitermination protein NusB (142 aa).

Belongs to the NusB family.

Functionally, involved in transcription antitermination. Required for transcription of ribosomal RNA (rRNA) genes. Binds specifically to the boxA antiterminator sequence of the ribosomal RNA (rrn) operons. The polypeptide is Transcription antitermination protein NusB (Streptococcus uberis (strain ATCC BAA-854 / 0140J)).